The chain runs to 248 residues: Phosphate import ATP-binding protein PstB (248 aa).

An ABC transporter domain is found at 1 to 243 (MAVNDVNVFY…PQHNLTQGYI (243 aa)). 33 to 40 (GPSGCGKS) is an ATP binding site.

Belongs to the ABC transporter superfamily. Phosphate importer (TC 3.A.1.7) family. As to quaternary structure, the complex is composed of two ATP-binding proteins (PstB), two transmembrane proteins (PstC and PstA) and a solute-binding protein (PstS).

The protein localises to the cell inner membrane. It catalyses the reaction phosphate(out) + ATP + H2O = ADP + 2 phosphate(in) + H(+). Part of the ABC transporter complex PstSACB involved in phosphate import. Responsible for energy coupling to the transport system. The protein is Phosphate import ATP-binding protein PstB of Rhodospirillum rubrum (strain ATCC 11170 / ATH 1.1.1 / DSM 467 / LMG 4362 / NCIMB 8255 / S1).